A 250-amino-acid chain; its full sequence is 1-(5-phosphoribosyl)-5-[(5-phosphoribosylamino)methylideneamino] imidazole-4-carboxamide isomerase (250 aa).

The Proton acceptor role is filled by aspartate 8. Residue aspartate 131 is the Proton donor of the active site.

Belongs to the HisA/HisF family.

The protein localises to the cytoplasm. It catalyses the reaction 1-(5-phospho-beta-D-ribosyl)-5-[(5-phospho-beta-D-ribosylamino)methylideneamino]imidazole-4-carboxamide = 5-[(5-phospho-1-deoxy-D-ribulos-1-ylimino)methylamino]-1-(5-phospho-beta-D-ribosyl)imidazole-4-carboxamide. It participates in amino-acid biosynthesis; L-histidine biosynthesis; L-histidine from 5-phospho-alpha-D-ribose 1-diphosphate: step 4/9. This Paraburkholderia phymatum (strain DSM 17167 / CIP 108236 / LMG 21445 / STM815) (Burkholderia phymatum) protein is 1-(5-phosphoribosyl)-5-[(5-phosphoribosylamino)methylideneamino] imidazole-4-carboxamide isomerase.